The sequence spans 213 residues: uncharacterized protein (213 aa).

The next 3 membrane-spanning stretches (helical) occupy residues 26 to 46 (FINFIRIAIFIVMAWIGGLKV), 112 to 132 (ASYIIGAIIVTVGILTLAGIW), and 136 to 156 (AGLAGGLLTFGMSIVTLSFLI).

Its subcellular location is the cell membrane. This is an uncharacterized protein from Haemophilus influenzae (strain ATCC 51907 / DSM 11121 / KW20 / Rd).